The chain runs to 864 residues: Protein translocase subunit SecA (864 aa).

Residues Gln-87, Gly-105 to Thr-109, and Asp-494 contribute to the ATP site. Residues Ala-809–Ala-864 are disordered. Positions Lys-810 to Pro-820 are enriched in basic and acidic residues. Residues Cys-850, Cys-852, Cys-861, and Cys-862 each coordinate Zn(2+).

Belongs to the SecA family. As to quaternary structure, monomer and homodimer. Part of the essential Sec protein translocation apparatus which comprises SecA, SecYEG and auxiliary proteins SecDF-YajC and YidC. Requires Zn(2+) as cofactor.

Its subcellular location is the cell inner membrane. The protein resides in the cytoplasm. It carries out the reaction ATP + H2O + cellular proteinSide 1 = ADP + phosphate + cellular proteinSide 2.. In terms of biological role, part of the Sec protein translocase complex. Interacts with the SecYEG preprotein conducting channel. Has a central role in coupling the hydrolysis of ATP to the transfer of proteins into and across the cell membrane, serving as an ATP-driven molecular motor driving the stepwise translocation of polypeptide chains across the membrane. The polypeptide is Protein translocase subunit SecA (Oleidesulfovibrio alaskensis (strain ATCC BAA-1058 / DSM 17464 / G20) (Desulfovibrio alaskensis)).